The sequence spans 174 residues: Shikimate kinase (174 aa).

14-19 (GAGKST) is an ATP binding site. Ser-18 provides a ligand contact to Mg(2+). Asp-36, Arg-60, and Gly-82 together coordinate substrate. Arg-120 is an ATP binding site. Residue Arg-141 participates in substrate binding. Arg-158 lines the ATP pocket.

It belongs to the shikimate kinase family. As to quaternary structure, monomer. The cofactor is Mg(2+).

The protein resides in the cytoplasm. It carries out the reaction shikimate + ATP = 3-phosphoshikimate + ADP + H(+). Its pathway is metabolic intermediate biosynthesis; chorismate biosynthesis; chorismate from D-erythrose 4-phosphate and phosphoenolpyruvate: step 5/7. Catalyzes the specific phosphorylation of the 3-hydroxyl group of shikimic acid using ATP as a cosubstrate. The protein is Shikimate kinase of Buchnera aphidicola subsp. Baizongia pistaciae (strain Bp).